Consider the following 373-residue polypeptide: NAD(P)H-quinone oxidoreductase subunit 1 (373 aa).

Transmembrane regions (helical) follow at residues 28–48, 98–118, 129–149, 167–187, 205–225, 267–287, 309–329, and 348–368; these read LLWLPLPMLLVLVAAVVGVLV, LLFTLGPVLVVIPVIISWLII, VGVGIFLWIAFSSIQPIGLLM, AAQSISYEIPLALAVLAIVMM, ILSWNIWRQPVGFLIFWICAL, VLSAVLVSVLYLGGWGFPIPV, SVGIVMTVLKAYLLVFVAILL, and FLLPLSLVNLLVTAALKLAFP.

It belongs to the complex I subunit 1 family. As to quaternary structure, NDH-1 is composed of at least 11 different subunits.

The protein localises to the cellular thylakoid membrane. The enzyme catalyses a plastoquinone + NADH + (n+1) H(+)(in) = a plastoquinol + NAD(+) + n H(+)(out). It catalyses the reaction a plastoquinone + NADPH + (n+1) H(+)(in) = a plastoquinol + NADP(+) + n H(+)(out). Its function is as follows. NDH-1 shuttles electrons from an unknown electron donor, via FMN and iron-sulfur (Fe-S) centers, to quinones in the respiratory and/or the photosynthetic chain. The immediate electron acceptor for the enzyme in this species is believed to be plastoquinone. Couples the redox reaction to proton translocation, and thus conserves the redox energy in a proton gradient. The polypeptide is NAD(P)H-quinone oxidoreductase subunit 1 (Parasynechococcus marenigrum (strain WH8102)).